Reading from the N-terminus, the 564-residue chain is Centrosomal protein kizuna (564 aa).

The interval 1-21 is disordered; the sequence is MSEAGRAAAGPCPEVSPSRSQ. Residues 28–50 adopt a coiled-coil conformation; it reads RCLRDSETRRLELERKLMEYKSS. Disordered regions lie at residues 178–201, 304–345, 442–465, 487–519, and 531–564; these read QPAA…PTQA, TGPQ…EDEP, ECGD…PNDS, IGNN…RPEF, and AFWG…DFYD. Positions 313-324 are enriched in low complexity; the sequence is QQAASQDSSSSS. The span at 447-463 shows a compositional bias: polar residues; sequence SSVQSNESSYSLPSIPN. A compositionally biased stretch (basic and acidic residues) spans 493-519; that stretch reads EAKESQEMCSERSSSSERSGDLSRPEF.

Belongs to the kizuna family.

The protein localises to the cytoplasm. It is found in the cytoskeleton. The protein resides in the microtubule organizing center. Its subcellular location is the centrosome. It localises to the cilium basal body. Centrosomal protein required for establishing a robust mitotic centrosome architecture that can endure the forces that converge on the centrosomes during spindle formation. Required for stabilizing the expanded pericentriolar material around the centriole. This is Centrosomal protein kizuna (KIZ) from Gallus gallus (Chicken).